The primary structure comprises 488 residues: Envelope glycoprotein gp62 (488 aa).

Residues 1–20 (MGKFLATLILFFQFCPLILG) form the signal peptide. At 21–442 (DYSPSCCTLT…LGLSQWAREA (422 aa)) the chain is on the extracellular side. N-linked (GlcNAc...) asparagine; by host glycans are attached at residues N140 and N222. The CXXC motif lies at 225-228 (CIVC). Intrachain disulfides connect C225-C228, C225-C401, and C393-C400. N-linked (GlcNAc...) asparagine; by host glycosylation is found at N244 and N272. A fusion peptide region spans residues 313-333 (AVPVAVWLVSALAMGAGVAGR). 2 coiled-coil regions span residues 341 to 387 (ASGK…LLFW) and 397 to 429 (QEQC…GWGL). Residues 376–392 (AQNRRGLDLLFWEQGGL) are immunosuppression. The short motif at 393 to 401 (CKALQEQCC) is the CX6CC element. The N-linked (GlcNAc...) asparagine; by host glycan is linked to N404. Residues 443 to 463 (LQTGITLVALLLLVILAGPCI) traverse the membrane as a helical segment. C462 carries the S-palmitoyl cysteine; by host lipid modification. At 464 to 488 (LRQLRHLPSRVRYPHYSLINPESSL) the chain is on the cytoplasmic side.

As to quaternary structure, the mature envelope protein (Env) consists of a trimer of SU-TM heterodimers attached by a labile interchain disulfide bond. Specific enzymatic cleavages in vivo yield mature proteins. Envelope glycoproteins are synthesized as an inactive precursor that is N-glycosylated and processed likely by host cell furin or by a furin-like protease in the Golgi to yield the mature SU and TM proteins. The cleavage site between SU and TM requires the minimal sequence [KR]-X-[KR]-R. Post-translationally, the CXXC motif is highly conserved across a broad range of retroviral envelope proteins. It is thought to participate in the formation of a labile disulfide bond possibly with the CX6CC motif present in the transmembrane protein. Isomerization of the intersubunit disulfide bond to an SU intrachain disulfide bond is thought to occur upon receptor recognition in order to allow membrane fusion. In terms of processing, the transmembrane protein is palmitoylated.

It localises to the virion membrane. The protein localises to the host cell membrane. In terms of biological role, the surface protein (SU) attaches the virus to the host cell by binding to its receptor. This interaction triggers the refolding of the transmembrane protein (TM) and is thought to activate its fusogenic potential by unmasking its fusion peptide. Fusion occurs at the host cell plasma membrane. Functionally, the transmembrane protein (TM) acts as a class I viral fusion protein. Under the current model, the protein has at least 3 conformational states: pre-fusion native state, pre-hairpin intermediate state, and post-fusion hairpin state. During viral and target cell membrane fusion, the coiled coil regions (heptad repeats) assume a trimer-of-hairpins structure, positioning the fusion peptide in close proximity to the C-terminal region of the ectodomain. The formation of this structure appears to drive apposition and subsequent fusion of viral and target cell membranes. Membranes fusion leads to delivery of the nucleocapsid into the cytoplasm. The chain is Envelope glycoprotein gp62 (env) from Homo sapiens (Human).